Here is a 988-residue protein sequence, read N- to C-terminus: Echinoderm microtubule-associated protein-like 4 (988 aa).

An N-acetylmethionine modification is found at Met-1. The tract at residues 1–260 is microtubule-binding; it reads MDGFAGSLDD…IPSDVDNYDD (260 aa). A phosphoserine mark is found at Ser-7, Ser-13, Ser-16, Ser-61, and Ser-79. The stretch at 14–63 forms a coiled coil; sequence AASTSDVQDRLSALESRVQQQEDEITVLKAALADVLRRLAISEDHVASVK. Residue Thr-96 is modified to Phosphothreonine. The tract at residues 106-194 is disordered; the sequence is TLSSAAKSGT…WENSDDSRNK (89 aa). The span at 114–134 shows a compositional bias: basic and acidic residues; it reads GTEKKKEKPQGQREKKEDSHS. Ser-134 is subject to Phosphoserine; by NEK7. Low complexity predominate over residues 137–155; that stretch reads QSPQIRASPSPQPSSQPLQ. Ser-144 carries the post-translational modification Phosphoserine; by NEK6. Ser-146 carries the post-translational modification Phosphoserine; by NEK7. A compositionally biased stretch (polar residues) spans 156–168; the sequence is INRQTPESKSSAP. Ser-171 is subject to Phosphoserine. Positions 176–193 are enriched in basic and acidic residues; that stretch reads PTAEKSHNSWENSDDSRN. Position 200 is a phosphoserine (Ser-200). Thr-201 carries the phosphothreonine modification. Phosphotyrosine is present on Tyr-237. Thr-248 carries the post-translational modification Phosphothreonine. WD repeat units lie at residues 270 to 308, 312 to 359, 367 to 407, 414 to 449, 456 to 495, 511 to 549, 554 to 590, 593 to 632, 636 to 673, 679 to 715, 722 to 761, 771 to 829, and 836 to 875; these read LKLE…LFNY, TQRH…VWDS, VIGL…VWDW, AEIK…FWTW, RKQG…IWSK, QINR…LWDH, EREI…LRGT, DGFQ…MWNS, RLEW…VLDA, VSIH…LYTV, YSRY…YWDI, RSDC…LFQY, and APSH…QWKL. Thr-620 bears the Phosphothreonine; by NEK6 and NEK7 mark. The tract at residues 887-988 is disordered; it reads ITDASVTKTP…EEERGITPLC (102 aa). Polar residues predominate over residues 890–904; it reads ASVTKTPASSSETAR. 3 positions are modified to phosphoserine: Ser-906, Ser-908, and Ser-914. A compositionally biased stretch (polar residues) spans 927–939; the sequence is MGSSPTLVENSLE. Residues 944 to 953 are compositionally biased toward acidic residues; it reads PSEEQSEWGS.

It belongs to the WD repeat EMAP family. In terms of assembly, homotrimer; self-association is mediated by the N-terminal coiled coil. Interacts (via WD repeats) with NUDC. Interacts with alpha- and beta-tubulin during mitosis. Phosphorylated during mitosis. Phosphorylation at Ser-144 and Ser-146 promotes its dissociation from microtubules during mitosis which is required for efficient chromosome congression.

Its subcellular location is the cytoplasm. The protein localises to the cytoskeleton. The protein resides in the spindle. It is found in the microtubule organizing center. It localises to the midbody. Its function is as follows. Essential for the stability of microtubules (MTs). Essential for the formation of MTs. Required for the organization of the mitotic spindle and for the proper attachment of kinetochores to MTs. Promotes the recruitment of NUDC to the mitotic spindle for mitotic progression. The polypeptide is Echinoderm microtubule-associated protein-like 4 (Eml4) (Mus musculus (Mouse)).